We begin with the raw amino-acid sequence, 297 residues long: Light-independent protochlorophyllide reductase iron-sulfur ATP-binding protein (297 aa).

ATP contacts are provided by residues 41 to 46 (GIGKST) and Lys-70. Residue Ser-45 coordinates Mg(2+). The [4Fe-4S] cluster site is built by Cys-126 and Cys-160. ATP contacts are provided by residues 211-212 (NR) and 235-237 (PDL).

It belongs to the NifH/BchL/ChlL family. In terms of assembly, homodimer. Protochlorophyllide reductase is composed of three subunits; BchL, BchN and BchB. [4Fe-4S] cluster is required as a cofactor.

The catalysed reaction is chlorophyllide a + oxidized 2[4Fe-4S]-[ferredoxin] + 2 ADP + 2 phosphate = protochlorophyllide a + reduced 2[4Fe-4S]-[ferredoxin] + 2 ATP + 2 H2O. It participates in porphyrin-containing compound metabolism; bacteriochlorophyll biosynthesis (light-independent). Functionally, component of the dark-operative protochlorophyllide reductase (DPOR) that uses Mg-ATP and reduced ferredoxin to reduce ring D of protochlorophyllide (Pchlide) to form chlorophyllide a (Chlide). This reaction is light-independent. The L component serves as a unique electron donor to the NB-component of the complex, and binds Mg-ATP. The protein is Light-independent protochlorophyllide reductase iron-sulfur ATP-binding protein of Methylorubrum extorquens (strain PA1) (Methylobacterium extorquens).